The following is a 368-amino-acid chain: Repressor ROX1 (368 aa).

A DNA-binding region (HMG box) is located at residues 10-83; that stretch reads IPRPKNAFIL…EHERKYPEYK (74 aa). Disordered stretches follow at residues 100-121 and 242-273; these read IEQQQQQQQKEQQQQKQSQPQL and SSQTPVTTTTTSTTTATSSPGKFSSSPNSSVL. Residues 102-121 are compositionally biased toward low complexity; that stretch reads QQQQQQQKEQQQQKQSQPQL.

The protein resides in the nucleus. Its function is as follows. Transcription factor that represses the expression of HEM13, COX5B, ANB1, CYC7 or AAC3 (hypoxic function). Binds to the DNA sequence 5'-RRRTAACAAGAG-3'. The protein is Repressor ROX1 (ROX1) of Saccharomyces cerevisiae (strain ATCC 204508 / S288c) (Baker's yeast).